We begin with the raw amino-acid sequence, 951 residues long: Serine/threonine-protein phosphatase 4 regulatory subunit 1 (951 aa).

HEAT repeat units follow at residues 26-63 (ESDV…VFNR), 65-81 (MVAR…CDDE), 82-119 (RDCI…FCQE), 127-164 (AFSK…QELI), 168-206 (DVET…MVGK), 208-246 (ITER…VVGQ), 248-285 (ATEE…ATCQ), and 287-324 (IRRT…TFAN). Disordered stretches follow at residues 325–377 (PSSS…HSSA), 411–451 (SESP…PLDQ), and 474–499 (QQDP…GPPN). Residues 332-365 (FKDESKSSEDSSAEDKDRMRDNDVVEEEHRRPED) are compositionally biased toward basic and acidic residues. Polar residues-rich tracts occupy residues 411-421 (SESPQEAASND) and 430-445 (NSKS…SSPE). A compositionally biased stretch (basic and acidic residues) spans 474–487 (QQDPEERLSPERTG). The stretch at 506 to 543 (KELEEMIENLEPHMDDPDVKAQVDVLSAALRASSLDAH) is one HEAT 9 repeat. Residues 590-612 (DYVHGGADVSPGDGFSPDEDRRP) form a disordered region. HEAT repeat units lie at residues 699-735 (LTAA…LLHI), 800-838 (WISY…RCPK), and 862-899 (QFAV…EKEY). Position 936 is a phosphoserine (Ser-936).

In terms of assembly, serine/threonine-protein phosphatase 4 (PP4) occurs in different assemblies of the catalytic and one or more regulatory subunits. Component of the PP4 complex PPP4C-PPP4R1. Interacts with HDAC3.

Functionally, regulatory subunit of serine/threonine-protein phosphatase 4. May play a role in regulation of cell division in renal glomeruli. The PPP4C-PPP4R1 PP4 complex may play a role in dephosphorylation and regulation of HDAC3. Plays a role in the inhibition of TNF-induced NF-kappa-B activation by regulating the dephosphorylation of TRAF2. The protein is Serine/threonine-protein phosphatase 4 regulatory subunit 1 (Ppp4r1) of Mus musculus (Mouse).